A 311-amino-acid polypeptide reads, in one-letter code: MVSTATQIGHFSFDNCLMNAAGVYCMTKEELMEVEKSQAASFVTKTGTLEVRPGNPEPRYADTRLGSINSMGLPNNGFRYYLDFVSDLAKTGQHKPHFLSVVGLSPTETETILKAIMASDYEGLVELNLSCPNVPGKPQIAYDFETTDQLLENIFTYYTKPLGIKLPPYFDIVHFDQAAAIFNKYPLSFVNCVNSIGNGLVIKDEQVLIKPKNGFGGIGGDYIKPTALANVHAFYKRLKPSIHIIGTGGVKTGRDAFEHILCGASMVQIGTALHQEGPAIFERVTKELKTIMVEKGYQSLDDFRGNLRYKD.

Substrate is bound by residues Lys-45, 69–73, and Asn-128; that span reads NSMGL. 45–46 contributes to the FMN binding site; sequence KT. Asn-128 serves as a coordination point for FMN. Catalysis depends on Cys-131, which acts as the Nucleophile. Lys-165 and Val-193 together coordinate FMN. 194–195 contributes to the substrate binding site; sequence NS. FMN is bound by residues Gly-220, 248–249, and 270–271; these read GG and GT.

The protein belongs to the dihydroorotate dehydrogenase family. Type 1 subfamily. As to quaternary structure, homodimer. Requires FMN as cofactor.

The protein resides in the cytoplasm. The enzyme catalyses (S)-dihydroorotate + fumarate = orotate + succinate. It functions in the pathway pyrimidine metabolism; UMP biosynthesis via de novo pathway. Catalyzes the conversion of dihydroorotate to orotate with fumarate as the electron acceptor. This Streptococcus pyogenes serotype M1 protein is Putative dihydroorotate dehydrogenase A (fumarate) (pyrD).